Reading from the N-terminus, the 263-residue chain is Palmitoyltransferase ZDHHC22 (263 aa).

Over 1-9 the chain is Cytoplasmic; sequence MLALRLLNV. A helical membrane pass occupies residues 10 to 30; it reads VAPAYFLCISLVTFVLQLFLF. Over 31–48 the chain is Lumenal; it reads LPSMREDPAAARLFSPAL. A helical membrane pass occupies residues 49-69; that stretch reads LHGALFLFLSANALGNYVLVI. Topologically, residues 70–125 are cytoplasmic; it reads QNSPDDLGACQGASARKTPCPSPSTHFCRVCARVTLRHDHHCFFTGNCIGSRNMRN. A DHHC domain is found at 92-131; sequence PSTHFCRVCARVTLRHDHHCFFTGNCIGSRNMRNFVLFCL. Catalysis depends on Cys111, which acts as the S-palmitoyl cysteine intermediate. 2 helical membrane-spanning segments follow: residues 126–146 and 147–167; these read FVLFCLYTSLACLYSMVAGVA and YISAVLSISFAHPLAFLTLLP. Over 168-182 the chain is Cytoplasmic; sequence TSISQFFSGAVLGSE. The helical transmembrane segment at 183 to 203 threads the bilayer; it reads MFVILMLYLWFAIGLACAGFC. Residues 204–263 are Lumenal-facing; sequence CHQLLLILRGQTRHQVRKGVAVRARPWRKNLQEVFGKRWLLGLLVPMFNVGSESSKQQDK.

It belongs to the DHHC palmitoyltransferase family. In terms of assembly, interacts with CNN3. In terms of tissue distribution, widely expressed.

It localises to the endoplasmic reticulum membrane. It is found in the golgi apparatus membrane. The catalysed reaction is L-cysteinyl-[protein] + hexadecanoyl-CoA = S-hexadecanoyl-L-cysteinyl-[protein] + CoA. Functionally, palmitoyltransferase that could catalyze the addition of palmitate onto various protein substrates and be involved in a variety of cellular processes. Catalyzes the palmitoylation of KCNMA1, regulating localization of KCNMA1 to the plasma membrane. Might also mediate palmitoylation of CNN3. The chain is Palmitoyltransferase ZDHHC22 from Homo sapiens (Human).